Here is a 183-residue protein sequence, read N- to C-terminus: Fetal and adult testis-expressed transcript protein (183 aa).

The disordered stretch occupies residues 42 to 66 (SRSRGASQKKQKLEQKAAGSASAKR). A helical transmembrane segment spans residues 163–181 (TLIIAVLVSASIANLWLWM).

As to quaternary structure, interacts with BIK and RNF183. Interacts with IMMT/MIC60and EMD. In terms of tissue distribution, testis-specific in fetus (aged from 6 to 11 weeks). In adult, expressed predominantly in testis, with some expression in lung, heart, kidney, adrenal gland and whole brain. Highly expressed in certain types of cancer tissues such as hepatocellular carcinoma, colon and gastric cancer. Weakly expressed in normal pancreas.

The protein resides in the mitochondrion. It localises to the mitochondrion outer membrane. The protein localises to the endoplasmic reticulum membrane. In terms of biological role, involved in the regulation of endoplasmic reticulum (ER)-mitochondria coupling. Negatively regulates the ER-mitochondria distance and Ca(2+) transfer from ER to mitochondria possibly implicating it in the regulation of apoptosis. May collaborate with RNF183 to restrain BIK protein levels thus regulating apoptotic signaling. The chain is Fetal and adult testis-expressed transcript protein (FATE1) from Homo sapiens (Human).